A 1180-amino-acid polypeptide reads, in one-letter code: Lon protease homolog 2, peroxisomal (1180 aa).

Positions 19–366 constitute a Lon N-terminal domain; the sequence is LPTCKLDSNL…ELINMINQLI (348 aa). The tract at residues 416-465 is disordered; it reads PISNRGNIKSFNNSENGNNNKTNGSGITSRRPKSNEDGGEVYDEEDDDEE. A compositionally biased stretch (low complexity) spans 422 to 444; sequence NIKSFNNSENGNNNKTNGSGITS. Residues 452 to 465 show a composition bias toward acidic residues; the sequence is DGGEVYDEEDDDEE. An ATP-binding site is contributed by 667–674; the sequence is GPPGTGKT. In terms of domain architecture, Lon proteolytic spans 924 to 1163; sequence NSRVGIVNGL…YDVMKILWGE (240 aa). Active-site residues include Ser-1032 and Lys-1075.

The protein belongs to the peptidase S16 family.

The protein resides in the peroxisome matrix. It carries out the reaction Hydrolysis of proteins in presence of ATP.. In terms of biological role, ATP-dependent serine protease that mediates the selective degradation of misfolded and unassembled polypeptides in the peroxisomal matrix. Necessary for type 2 peroxisome targeting signal (PTS2)-containing protein processing and facilitates peroxisome matrix protein import. The protein is Lon protease homolog 2, peroxisomal of Scheffersomyces stipitis (strain ATCC 58785 / CBS 6054 / NBRC 10063 / NRRL Y-11545) (Yeast).